A 385-amino-acid chain; its full sequence is Isocitrate dehydrogenase [NAD] subunit beta, mitochondrial (385 aa).

A mitochondrion-targeting transit peptide spans 1-34; the sequence is MAALSGVRWLTRALVSAGNPGAWRGLSTSAAAHA. N6-acetyllysine is present on lysine 199.

Belongs to the isocitrate and isopropylmalate dehydrogenases family. Heterooligomer of subunits alpha (IDH3A), beta (IDH3B), and gamma (IDH3G) in the apparent ratio of 2:1:1. The heterodimer containing one IDH3A and one IDH3B subunit and the heterodimer containing one IDH3A and one IDH3G subunit assemble into a heterotetramer (which contains two subunits of IDH3A, one of IDH3B and one of IDH3G) and further into the heterooctamer.

It is found in the mitochondrion. Its activity is regulated as follows. The heterotetramer and the heterodimer composed of IDH3A and IDH3G subunits can be allosterically activated by citrate (CIT) or/and ADP, and the two activators can act independently or synergistically. The heterodimer composed of IDH3A and IDH3B subunits cannot be allosterically regulated and the allosteric regulation of the heterotetramer is through the IDH3G subunit and not the IDH3B subunit. The IDH3G subunit contains the allosteric site which consists of a CIT-binding site and an ADP-binding site, and the binding of CIT and ADP causes conformational changes at the allosteric site which are transmitted to the active site in the catalytic subunit (IDH3A) through a cascade of conformational changes at the heterodimer interface, leading to stabilization of the isocitrate-binding at the active site and thus activation of the enzyme. ATP can activate the heterotetramer and the heterodimer composed of IDH3A and IDH3G subunits at low concentrations but inhibits their activities at high concentrations, whereas ATP exhibits only inhibitory effect on the heterodimer composed of IDH3A and IDH3B subunits. Functionally, plays a structural role to facilitate the assembly and ensure the full activity of the enzyme catalyzing the decarboxylation of isocitrate (ICT) into alpha-ketoglutarate. The heterodimer composed of the alpha (IDH3A) and beta (IDH3B) subunits and the heterodimer composed of the alpha (IDH3A) and gamma (IDH3G) subunits, have considerable basal activity but the full activity of the heterotetramer (containing two subunits of IDH3A, one of IDH3B and one of IDH3G) requires the assembly and cooperative function of both heterodimers. The polypeptide is Isocitrate dehydrogenase [NAD] subunit beta, mitochondrial (IDH3B) (Macaca fascicularis (Crab-eating macaque)).